The following is a 239-amino-acid chain: Ribosomal RNA small subunit methyltransferase G (239 aa).

Residues Gly-76, Phe-81, 99–101 (DSS), 128–129 (IE), and Arg-147 contribute to the S-adenosyl-L-methionine site.

This sequence belongs to the methyltransferase superfamily. RNA methyltransferase RsmG family.

It is found in the cytoplasm. Its function is as follows. Specifically methylates the N7 position of a guanine in 16S rRNA. The polypeptide is Ribosomal RNA small subunit methyltransferase G (Prochlorococcus marinus subsp. pastoris (strain CCMP1986 / NIES-2087 / MED4)).